The chain runs to 209 residues: Small ribosomal subunit protein uS4 (209 aa).

One can recognise an S4 RNA-binding domain in the interval C99–G161.

The protein belongs to the universal ribosomal protein uS4 family. Part of the 30S ribosomal subunit. Contacts protein S5. The interaction surface between S4 and S5 is involved in control of translational fidelity.

Its function is as follows. One of the primary rRNA binding proteins, it binds directly to 16S rRNA where it nucleates assembly of the body of the 30S subunit. In terms of biological role, with S5 and S12 plays an important role in translational accuracy. The protein is Small ribosomal subunit protein uS4 of Acidobacterium capsulatum (strain ATCC 51196 / DSM 11244 / BCRC 80197 / JCM 7670 / NBRC 15755 / NCIMB 13165 / 161).